The chain runs to 246 residues: Virulence plasmid protein pGP6-D (246 aa).

The protein belongs to the UPF0137 (pGP6-D) family.

This is Virulence plasmid protein pGP6-D from Chlamydia muridarum (strain MoPn / Nigg).